Reading from the N-terminus, the 118-residue chain is UPF0342 protein BC_0880 (118 aa).

The protein belongs to the UPF0342 family.

This chain is UPF0342 protein BC_0880, found in Bacillus cereus (strain ATCC 14579 / DSM 31 / CCUG 7414 / JCM 2152 / NBRC 15305 / NCIMB 9373 / NCTC 2599 / NRRL B-3711).